The chain runs to 425 residues: Glutamyl-tRNA reductase (425 aa).

Residues 49–52, Ser-107, 112–114, and Gln-118 each bind substrate; these read TCNR and EPQ. The Nucleophile role is filled by Cys-50. 187 to 192 serves as a coordination point for NADP(+); it reads GAGETI.

It belongs to the glutamyl-tRNA reductase family. As to quaternary structure, homodimer.

It catalyses the reaction (S)-4-amino-5-oxopentanoate + tRNA(Glu) + NADP(+) = L-glutamyl-tRNA(Glu) + NADPH + H(+). It functions in the pathway porphyrin-containing compound metabolism; protoporphyrin-IX biosynthesis; 5-aminolevulinate from L-glutamyl-tRNA(Glu): step 1/2. Catalyzes the NADPH-dependent reduction of glutamyl-tRNA(Glu) to glutamate 1-semialdehyde (GSA). In Pseudomonas putida (strain GB-1), this protein is Glutamyl-tRNA reductase.